Here is a 945-residue protein sequence, read N- to C-terminus: Leucine--tRNA ligase 1 (945 aa).

Residues 42–52 carry the 'HIGH' region motif; the sequence is PYTNSPLHIGH. The 'KMSKS' region motif lies at 625 to 629; it reads KMSKS. Lys-628 is a binding site for ATP.

The protein belongs to the class-I aminoacyl-tRNA synthetase family.

Its subcellular location is the cytoplasm. The enzyme catalyses tRNA(Leu) + L-leucine + ATP = L-leucyl-tRNA(Leu) + AMP + diphosphate. This is Leucine--tRNA ligase 1 from Sulfurisphaera tokodaii (strain DSM 16993 / JCM 10545 / NBRC 100140 / 7) (Sulfolobus tokodaii).